Consider the following 167-residue polypeptide: Urease accessory protein UreE (167 aa).

The disordered stretch occupies residues Ala-137 to Asp-167. The span at His-149–Asp-167 shows a compositional bias: basic and acidic residues.

This sequence belongs to the UreE family.

The protein localises to the cytoplasm. In terms of biological role, involved in urease metallocenter assembly. Binds nickel. Probably functions as a nickel donor during metallocenter assembly. This chain is Urease accessory protein UreE, found in Rhizobium rhizogenes (strain K84 / ATCC BAA-868) (Agrobacterium radiobacter).